The primary structure comprises 735 residues: Wall-associated receptor kinase 1 (735 aa).

The N-terminal stretch at Met-1–Gly-24 is a signal peptide. The Extracellular portion of the chain corresponds to Gln-25–Glu-331. 9 N-linked (GlcNAc...) asparagine glycosylation sites follow: Asn-38, Asn-56, Asn-80, Asn-90, Asn-113, Asn-140, Asn-209, Asn-235, and Asn-250. The interval Arg-67–Leu-254 is polygalacturonic acid-binding. The region spanning Gly-234–Gln-281 is the EGF-like 1 domain. Disulfide bonds link Cys-238–Cys-253, Cys-247–Cys-264, Cys-266–Cys-280, Cys-286–Cys-303, Cys-297–Cys-312, and Cys-314–Cys-327. The 47-residue stretch at Asp-282 to Lys-328 folds into the EGF-like 2; calcium-binding domain. The N-linked (GlcNAc...) asparagine glycan is linked to Asn-296. The chain crosses the membrane as a helical span at residues Phe-332–Val-352. The Cytoplasmic segment spans residues Ala-353–Arg-735. Thr-398 is modified (phosphothreonine). The 284-residue stretch at Tyr-409–Ser-692 folds into the Protein kinase domain. Residues Leu-415–Val-423 and Lys-437 each bind ATP. Phosphotyrosine is present on Tyr-482. The Proton acceptor role is filled by Asp-534. Thr-568 and Thr-573 each carry phosphothreonine. Tyr-581 carries the phosphotyrosine modification.

This sequence belongs to the protein kinase superfamily. Ser/Thr protein kinase family. As to quaternary structure, interacts with the glycine-rich proteins GRP3 and GRP3S, and the type 2C protein phosphatase KAPP. Component of a 500 kDa complex, composed of WAK1, GRP3 and KAPP. Interacts with the oxygen-evolving enhancer protein 2 (OEE2). Predominantly expressed in green tissues such as stems and leaves. Detected at organ junctions.

The protein localises to the membrane. The catalysed reaction is L-seryl-[protein] + ATP = O-phospho-L-seryl-[protein] + ADP + H(+). The enzyme catalyses L-threonyl-[protein] + ATP = O-phospho-L-threonyl-[protein] + ADP + H(+). Its function is as follows. Serine/threonine-protein kinase that may function as a signaling receptor of extracellular matrix component. Binding to pectin may have significance in the control of cell expansion, morphogenesis and development. Required during plant's response to pathogen infection and in plant defense against heavy metal toxicity. Phosphorylates the oxygen-evolving enhancer protein 2 (OEE2) in an GRP-3-dependent manner. The protein is Wall-associated receptor kinase 1 (WAK1) of Arabidopsis thaliana (Mouse-ear cress).